Consider the following 248-residue polypeptide: Probable phosphatase VCM66_A0854 (248 aa).

Residues histidine 8, histidine 10, histidine 16, histidine 41, glutamate 74, histidine 102, histidine 132, aspartate 194, and histidine 196 each contribute to the Zn(2+) site.

Belongs to the PHP family. It depends on Zn(2+) as a cofactor.

The protein is Probable phosphatase VCM66_A0854 of Vibrio cholerae serotype O1 (strain M66-2).